Consider the following 255-residue polypeptide: Acetylglutamate kinase (255 aa).

Substrate contacts are provided by residues 40 to 41 (GG), R62, and N153.

Belongs to the acetylglutamate kinase family. ArgB subfamily.

It is found in the cytoplasm. The catalysed reaction is N-acetyl-L-glutamate + ATP = N-acetyl-L-glutamyl 5-phosphate + ADP. Its pathway is amino-acid biosynthesis; L-arginine biosynthesis; N(2)-acetyl-L-ornithine from L-glutamate: step 2/4. Functionally, catalyzes the ATP-dependent phosphorylation of N-acetyl-L-glutamate. This Bacillus cereus (strain AH187) protein is Acetylglutamate kinase.